We begin with the raw amino-acid sequence, 554 residues long: 3-(3-hydroxy-phenyl)propionate/3-hydroxycinnamic acid hydroxylase (554 aa).

FAD contacts are provided by residues 17–46 (QVAI…VVEK) and 285–295 (FRIDRVLLAGD).

This sequence belongs to the PheA/TfdB FAD monooxygenase family. FAD is required as a cofactor.

It carries out the reaction 3-(3-hydroxyphenyl)propanoate + NADH + O2 + H(+) = 3-(2,3-dihydroxyphenyl)propanoate + NAD(+) + H2O. It catalyses the reaction (2E)-3-(3-hydroxyphenyl)prop-2-enoate + NADH + O2 + H(+) = (2E)-3-(2,3-dihydroxyphenyl)prop-2-enoate + NAD(+) + H2O. The protein operates within aromatic compound metabolism; 3-phenylpropanoate degradation. Catalyzes the insertion of one atom of molecular oxygen into position 2 of the phenyl ring of 3-(3-hydroxyphenyl)propionate (3-HPP) and hydroxycinnamic acid (3HCI). This is 3-(3-hydroxy-phenyl)propionate/3-hydroxycinnamic acid hydroxylase from Escherichia coli O139:H28 (strain E24377A / ETEC).